A 630-amino-acid chain; its full sequence is Elongation factor 4 (630 aa).

Positions 1–22 (MTVARNRAGAGPGKGSPISSFA) are disordered. Positions 30-211 (ARIRNFCIIA…EVVRQVPAPV (182 aa)) constitute a tr-type G domain. GTP-binding positions include 42–47 (DHGKST) and 158–161 (NKID).

The protein belongs to the TRAFAC class translation factor GTPase superfamily. Classic translation factor GTPase family. LepA subfamily.

The protein resides in the cell membrane. The catalysed reaction is GTP + H2O = GDP + phosphate + H(+). In terms of biological role, required for accurate and efficient protein synthesis under certain stress conditions. May act as a fidelity factor of the translation reaction, by catalyzing a one-codon backward translocation of tRNAs on improperly translocated ribosomes. Back-translocation proceeds from a post-translocation (POST) complex to a pre-translocation (PRE) complex, thus giving elongation factor G a second chance to translocate the tRNAs correctly. Binds to ribosomes in a GTP-dependent manner. This Rhodococcus jostii (strain RHA1) protein is Elongation factor 4.